The sequence spans 361 residues: Molybdenum import ATP-binding protein ModC (361 aa).

The region spanning 1–228 (MLNINIEKQF…EQMRPWVPLQ (228 aa)) is the ABC transporter domain. An ATP-binding site is contributed by 31-38 (GRSGAGKT). Residues 289–356 (GSSIRNLLRG…IKGVTMTQMD (68 aa)) form the Mop domain.

Belongs to the ABC transporter superfamily. Molybdate importer (TC 3.A.1.8) family. The complex is composed of two ATP-binding proteins (ModC), two transmembrane proteins (ModB) and a solute-binding protein (ModA).

It is found in the cell inner membrane. It carries out the reaction molybdate(out) + ATP + H2O = molybdate(in) + ADP + phosphate + H(+). In terms of biological role, part of the ABC transporter complex ModABC involved in molybdenum import. Responsible for energy coupling to the transport system. The protein is Molybdenum import ATP-binding protein ModC of Shewanella sp. (strain MR-4).